The chain runs to 345 residues: Magnesium-chelatase 38 kDa subunit (345 aa).

Gly35–Ser42 is a binding site for ATP.

Belongs to the Mg-chelatase subunits D/I family.

It carries out the reaction protoporphyrin IX + Mg(2+) + ATP + H2O = Mg-protoporphyrin IX + ADP + phosphate + 3 H(+). It functions in the pathway porphyrin-containing compound metabolism; bacteriochlorophyll biosynthesis. In terms of biological role, involved in bacteriochlorophyll biosynthesis; introduces a magnesium ion into protoporphyrin IX to yield Mg-protoporphyrin IX. This is Magnesium-chelatase 38 kDa subunit (bchI) from Acidiphilium rubrum.